The following is a 183-amino-acid chain: Guanylate kinase (183 aa).

A Guanylate kinase-like domain is found at 4–182 (GRVVVLTGPS…AITALEAAIF (179 aa)). ATP is bound at residue 11-18 (GPSGVGKG).

This sequence belongs to the guanylate kinase family.

Its subcellular location is the cytoplasm. It carries out the reaction GMP + ATP = GDP + ADP. It catalyses the reaction dZMP + ATP = dZDP + ADP. The protein operates within purine metabolism. Essential for recycling GMP and indirectly, cGMP. Its function is as follows. (Microbial infection) Catalyzes the phosphorylation of dZMP to dZDP, when the bacterium is infected by a phage that produces the substrate for the synthesis of dZTP (2- amino-2'-deoxyadenosine 5'-triphosphate), which is then used by the phage as a DNA polymerase substrate. The sequence is that of Guanylate kinase from Synechococcus elongatus (strain ATCC 33912 / PCC 7942 / FACHB-805) (Anacystis nidulans R2).